A 392-amino-acid polypeptide reads, in one-letter code: Glycerophosphodiester phosphodiesterase GDPD5 (392 aa).

The first 21 residues, methionine 1 to glycine 21, serve as a signal peptide directing secretion. In terms of domain architecture, GP-PDE spans proline 44–glutamine 362. 4 N-linked (GlcNAc...) asparagine glycosylation sites follow: asparagine 120, asparagine 239, asparagine 260, and asparagine 329.

This sequence belongs to the glycerophosphoryl diester phosphodiesterase family. As to expression, expressed in roots, rosette and cauline leaves, stems, flowers and siliques.

It is found in the secreted. The protein resides in the cell wall. The protein localises to the vacuole. It carries out the reaction a sn-glycero-3-phosphodiester + H2O = an alcohol + sn-glycerol 3-phosphate + H(+). This Arabidopsis thaliana (Mouse-ear cress) protein is Glycerophosphodiester phosphodiesterase GDPD5.